A 406-amino-acid chain; its full sequence is Dual-specificity RNA methyltransferase RlmN (406 aa).

The active-site Proton acceptor is Glu-119. The Radical SAM core domain occupies 125 to 370 (DKGRGTLCVS…AMVRRTRGDD (246 aa)). Residues Cys-132 and Cys-375 are joined by a disulfide bond. [4Fe-4S] cluster contacts are provided by Cys-139, Cys-143, and Cys-146. Residues 192–193 (GE), Ser-224, 246–248 (SLH), and Asn-332 contribute to the S-adenosyl-L-methionine site. The S-methylcysteine intermediate role is filled by Cys-375.

This sequence belongs to the radical SAM superfamily. RlmN family. [4Fe-4S] cluster serves as cofactor.

The protein resides in the cytoplasm. The catalysed reaction is adenosine(2503) in 23S rRNA + 2 reduced [2Fe-2S]-[ferredoxin] + 2 S-adenosyl-L-methionine = 2-methyladenosine(2503) in 23S rRNA + 5'-deoxyadenosine + L-methionine + 2 oxidized [2Fe-2S]-[ferredoxin] + S-adenosyl-L-homocysteine. It catalyses the reaction adenosine(37) in tRNA + 2 reduced [2Fe-2S]-[ferredoxin] + 2 S-adenosyl-L-methionine = 2-methyladenosine(37) in tRNA + 5'-deoxyadenosine + L-methionine + 2 oxidized [2Fe-2S]-[ferredoxin] + S-adenosyl-L-homocysteine. Functionally, specifically methylates position 2 of adenine 2503 in 23S rRNA and position 2 of adenine 37 in tRNAs. m2A2503 modification seems to play a crucial role in the proofreading step occurring at the peptidyl transferase center and thus would serve to optimize ribosomal fidelity. This Xylella fastidiosa (strain M12) protein is Dual-specificity RNA methyltransferase RlmN.